The primary structure comprises 253 residues: Low affinity immunoglobulin gamma Fc region receptor III-B (253 aa).

An N-terminal signal peptide occupies residues 1 to 20; sequence MGQPLPPVALLLLVSASSRA. Topologically, residues 21 to 207 are extracellular; the sequence is ADVPKALVLL…VSSSVLPWHQ (187 aa). 2 Ig-like C2-type domains span residues 24–105 and 120–189; these read PKAL…LRVH and EGEP…VTIT. 2 disulfide bridges follow: Cys47–Cys89 and Cys128–Cys172. N-linked (GlcNAc...) asparagine glycans are attached at residues Asn56, Asn63, Asn165, and Asn180. Residues 208-226 form a helical membrane-spanning segment; that stretch reads IAFCLVMGLLLAADTGLYF. At 227–253 the chain is on the cytoplasmic side; that stretch reads SVQRDLRSSQRARKEHTLGWSLGSQDK.

As to quaternary structure, forms a heterooligomeric complex with ITAM-containing signaling subunits FCER1G. Interacts (via transmembrane domain) with signaling subunits; this interaction is a prerequisite for receptor complex expression on the cell surface and intracellular signal transduction. Binds the Fc region of antigen-complexed IgG.

It is found in the cell membrane. Functionally, receptor for the invariable Fc fragment of immunoglobulin gamma (IgG). Optimally activated upon binding of clustered antigen-IgG complexes displayed on cell surfaces, triggers lysis of antibody-coated cells, a process known as antibody-dependent cellular cytotoxicity (ADCC). Does not bind free monomeric IgG, thus avoiding inappropriate effector cell activation in the absence of antigenic trigger. Mediates IgG effector functions on natural killer (NK) cells. Binds antigen-IgG complexes generated upon infection and triggers NK cell-dependent cytokine production and degranulation to limit viral load and propagation. Fc-binding subunit that associates with FCER1G adapters to form functional signaling complexes. Following the engagement of antigen-IgG complexes, triggers phosphorylation of immunoreceptor tyrosine-based activation motif (ITAM)-containing adapters with subsequent activation of phosphatidylinositol 3-kinase signaling and sustained elevation of intracellular calcium that ultimately drive NK cell activation. Mediates enhanced ADCC in response to afucosylated IgGs. This chain is Low affinity immunoglobulin gamma Fc region receptor III-B (FCGR3B), found in Oryctolagus cuniculus (Rabbit).